Here is a 300-residue protein sequence, read N- to C-terminus: Glutamyl-Q tRNA(Asp) synthetase (300 aa).

L-glutamate is bound by residues 8–12 (RFAPS) and E44. Positions 11 to 21 (PSPTGALHAGS) match the 'HIGH' region motif. Zn(2+)-binding residues include C100, C102, Y126, and C130. L-glutamate is bound by residues Y190 and R208. A 'KMSKS' region motif is present at residues 246–250 (KLSKQ). Position 249 (K249) interacts with ATP.

This sequence belongs to the class-I aminoacyl-tRNA synthetase family. GluQ subfamily. It depends on Zn(2+) as a cofactor.

Functionally, catalyzes the tRNA-independent activation of glutamate in presence of ATP and the subsequent transfer of glutamate onto a tRNA(Asp). Glutamate is transferred on the 2-amino-5-(4,5-dihydroxy-2-cyclopenten-1-yl) moiety of the queuosine in the wobble position of the QUC anticodon. This is Glutamyl-Q tRNA(Asp) synthetase from Leptothrix cholodnii (strain ATCC 51168 / LMG 8142 / SP-6) (Leptothrix discophora (strain SP-6)).